Reading from the N-terminus, the 64-residue chain is Large ribosomal subunit protein bL35 (64 aa).

It belongs to the bacterial ribosomal protein bL35 family.

The sequence is that of Large ribosomal subunit protein bL35 from Chlorobium limicola (strain DSM 245 / NBRC 103803 / 6330).